The chain runs to 346 residues: N-acetyl-gamma-glutamyl-phosphate reductase (346 aa).

The active site involves Cys-149.

The protein belongs to the NAGSA dehydrogenase family. Type 1 subfamily.

The protein resides in the cytoplasm. The enzyme catalyses N-acetyl-L-glutamate 5-semialdehyde + phosphate + NADP(+) = N-acetyl-L-glutamyl 5-phosphate + NADPH + H(+). It functions in the pathway amino-acid biosynthesis; L-arginine biosynthesis; N(2)-acetyl-L-ornithine from L-glutamate: step 3/4. Functionally, catalyzes the NADPH-dependent reduction of N-acetyl-5-glutamyl phosphate to yield N-acetyl-L-glutamate 5-semialdehyde. The protein is N-acetyl-gamma-glutamyl-phosphate reductase of Citrifermentans bemidjiense (strain ATCC BAA-1014 / DSM 16622 / JCM 12645 / Bem) (Geobacter bemidjiensis).